A 600-amino-acid polypeptide reads, in one-letter code: Nisin transport ATP-binding protein NisT (600 aa).

5 consecutive transmembrane segments (helical) span residues 34 to 54 (AIYL…SLFI), 69 to 89 (LINI…LGQL), 147 to 167 (AIIV…FIGT), 168 to 188 (WNIG…VLFL), and 260 to 280 (IFLD…MILS). One can recognise an ABC transmembrane type-1 domain in the interval 34-317 (AIYLIVLNAI…MIQNIYIIYN (284 aa)). Positions 352–592 (VKVINLSYVY…CQYYQELYYS (241 aa)) constitute an ABC transporter domain. 386–393 (GKNGSGKS) provides a ligand contact to ATP.

This sequence belongs to the ABC transporter superfamily. Nisin exporter (TC 3.A.1.111.3) family.

The protein localises to the cell membrane. Probably implicated in the export process of the lantibiotic nisin. The protein is Nisin transport ATP-binding protein NisT (nisT) of Lactococcus lactis subsp. lactis (Streptococcus lactis).